The chain runs to 58 residues: RIQSDLIRAALEDADMKNEKNILSSIMGSLGTIGNVVGNVCCSITKSCCASWLFPRLE.

Positions 1-20 (RIQSDLIRAALEDADMKNEK) are excised as a propeptide.

The protein belongs to the conotoxin T superfamily. Contains 2 disulfide bonds that can be either 'C1-C3, C2-C4' or 'C1-C4, C2-C3', since these disulfide connectivities have been observed for conotoxins with cysteine framework V (for examples, see AC P0DQQ7 and AC P81755). As to expression, expressed by the venom duct.

It localises to the secreted. The polypeptide is Conotoxin Ar5.4 (Conus arenatus (Sand-dusted cone)).